Here is a 951-residue protein sequence, read N- to C-terminus: Valine--tRNA ligase (951 aa).

The 'HIGH' region signature appears at 42 to 52 (PNVTGSLHMGH). The 'KMSKS' region motif lies at 554-558 (KMSKS). Lys-557 contributes to the ATP binding site. A coiled-coil region spans residues 880–944 (AGLINKEDEL…AEAKAKLIEQ (65 aa)).

This sequence belongs to the class-I aminoacyl-tRNA synthetase family. ValS type 1 subfamily. As to quaternary structure, monomer.

It is found in the cytoplasm. The enzyme catalyses tRNA(Val) + L-valine + ATP = L-valyl-tRNA(Val) + AMP + diphosphate. Catalyzes the attachment of valine to tRNA(Val). As ValRS can inadvertently accommodate and process structurally similar amino acids such as threonine, to avoid such errors, it has a 'posttransfer' editing activity that hydrolyzes mischarged Thr-tRNA(Val) in a tRNA-dependent manner. This Escherichia coli (strain K12) protein is Valine--tRNA ligase (valS).